A 125-amino-acid polypeptide reads, in one-letter code: Histone H2B (125 aa).

A disordered region spans residues 1–32 (MAPKVRAAKKGEKRVGKAKSGTAETAKRRRGK). The O-linked (GlcNAc) serine glycan is linked to S112. K120 participates in a covalent cross-link: Glycyl lysine isopeptide (Lys-Gly) (interchain with G-Cter in ubiquitin).

This sequence belongs to the histone H2B family. As to quaternary structure, the nucleosome is a histone octamer containing two molecules each of H2A, H2B, H3 and H4 assembled in one H3-H4 heterotetramer and two H2A-H2B heterodimers. The octamer wraps approximately 147 bp of DNA. In terms of processing, monoubiquitination of Lys-120 gives a specific tag for epigenetic transcriptional activation and is also prerequisite for histone H3 'Lys-4' and 'Lys-79' methylation. Post-translationally, glcNAcylation at Ser-112 promotes monoubiquitination of Lys-120. It fluctuates in response to extracellular glucose, and associates with transcribed genes.

The protein resides in the nucleus. It is found in the chromosome. Functionally, core component of nucleosome. Nucleosomes wrap and compact DNA into chromatin, limiting DNA accessibility to the cellular machineries which require DNA as a template. Histones thereby play a central role in transcription regulation, DNA repair, DNA replication and chromosomal stability. DNA accessibility is regulated via a complex set of post-translational modifications of histones, also called histone code, and nucleosome remodeling. The polypeptide is Histone H2B (Acropora formosa (Staghorn coral)).